Consider the following 66-residue polypeptide: Large ribosomal subunit protein bL35 (66 aa).

It belongs to the bacterial ribosomal protein bL35 family.

The sequence is that of Large ribosomal subunit protein bL35 from Synechococcus sp. (strain JA-2-3B'a(2-13)) (Cyanobacteria bacterium Yellowstone B-Prime).